The chain runs to 187 residues: TATA-box-binding protein (187 aa).

2 consecutive repeat copies span residues 10 to 86 (IENV…FDKL) and 101 to 179 (VQNI…VSRL).

The protein belongs to the TBP family.

Its function is as follows. General factor that plays a role in the activation of archaeal genes transcribed by RNA polymerase. Binds specifically to the TATA box promoter element which lies close to the position of transcription initiation. The protein is TATA-box-binding protein of Natronomonas pharaonis (strain ATCC 35678 / DSM 2160 / CIP 103997 / JCM 8858 / NBRC 14720 / NCIMB 2260 / Gabara) (Halobacterium pharaonis).